We begin with the raw amino-acid sequence, 221 residues long: Iron-sulfur cluster repair protein YtfE (221 aa).

It belongs to the RIC family. YtfE subfamily. In terms of assembly, homodimer.

It localises to the cytoplasm. Its function is as follows. Di-iron-containing protein involved in the repair of iron-sulfur clusters damaged by oxidative and nitrosative stress conditions. The chain is Iron-sulfur cluster repair protein YtfE from Cronobacter sakazakii (strain ATCC BAA-894) (Enterobacter sakazakii).